The primary structure comprises 302 residues: Phosphoribosylaminoimidazole-succinocarboxamide synthase (302 aa).

The protein belongs to the SAICAR synthetase family.

The enzyme catalyses 5-amino-1-(5-phospho-D-ribosyl)imidazole-4-carboxylate + L-aspartate + ATP = (2S)-2-[5-amino-1-(5-phospho-beta-D-ribosyl)imidazole-4-carboxamido]succinate + ADP + phosphate + 2 H(+). The protein operates within purine metabolism; IMP biosynthesis via de novo pathway; 5-amino-1-(5-phospho-D-ribosyl)imidazole-4-carboxamide from 5-amino-1-(5-phospho-D-ribosyl)imidazole-4-carboxylate: step 1/2. In Cupriavidus necator (strain ATCC 17699 / DSM 428 / KCTC 22496 / NCIMB 10442 / H16 / Stanier 337) (Ralstonia eutropha), this protein is Phosphoribosylaminoimidazole-succinocarboxamide synthase.